The following is a 415-amino-acid chain: Dynein assembly factor with WD repeat domains 1 (415 aa).

WD repeat units lie at residues 90-129 (AHIL…ELNT), 132-174 (GHRN…HTFR), 175-214 (GHTA…EVCT), 217-256 (GHSA…KVNI), 259-298 (GHCA…CVAT), 301-340 (GHDD…CIAK), 343-384 (GHEG…QVLE), and 386-415 (HTDE…RIWR).

It belongs to the WD repeat WDR69 family. In terms of assembly, interacts with IFT46.

The protein localises to the cytoplasm. The protein resides in the cytoskeleton. Its subcellular location is the flagellum basal body. It localises to the flagellum axoneme. Functionally, required for axonemal dynein assembly and ciliary motility in ciliated organs, including Kupffer's vesicle, during embryogenesis. Facilitates the onset of robust cilia motility during development. The chain is Dynein assembly factor with WD repeat domains 1 (DAW1) from Macaca fascicularis (Crab-eating macaque).